The primary structure comprises 187 residues: Phosphatidylethanolamine-binding protein 1 (187 aa).

Phosphoserine occurs at positions 6 and 13. A Phosphothreonine modification is found at T42. S52, S54, S98, and S153 each carry phosphoserine. The interaction with RAF1 stretch occupies residues 93 to 134; that stretch reads KGNDISSGTVLSDYVGSGPPKGTGLHRYVWLVYEQARPLKCD.

The protein belongs to the phosphatidylethanolamine-binding protein family. Has a tendency to form dimers by disulfide cross-linking. Interacts with RAF1 and this interaction is enhanced if RAF1 is phosphorylated on residues 'Ser-338', 'Ser-339', 'Tyr-340' and 'Tyr-341'. Interacts with ALOX15; in response to IL13/interleukin-13, prevents the interaction of PEBP1 with RAF1 to activate the ERK signaling cascade.

The protein localises to the cytoplasm. Functionally, binds ATP, opioids and phosphatidylethanolamine. Has lower affinity for phosphatidylinositol and phosphatidylcholine. Serine protease inhibitor which inhibits thrombin, neuropsin and chymotrypsin but not trypsin, tissue type plasminogen activator and elastase. Inhibits the kinase activity of RAF1 by inhibiting its activation and by dissociating the RAF1/MEK complex and acting as a competitive inhibitor of MEK phosphorylation. HCNP may be involved in the function of the presynaptic cholinergic neurons of the central nervous system. HCNP increases the production of choline acetyltransferase but not acetylcholinesterase. Seems to be mediated by a specific receptor. In Macaca fascicularis (Crab-eating macaque), this protein is Phosphatidylethanolamine-binding protein 1 (PEBP1).